The chain runs to 252 residues: Small ribosomal subunit protein uS2A (252 aa).

Ser-2 is modified (N-acetylserine). Residues 209–252 form a disordered region; that stretch reads EVEQQAAEETTSTGADAEESKEEVAEGQNEASEWAEENTEAVSW. Positions 241-252 are enriched in acidic residues; the sequence is EWAEENTEAVSW.

It belongs to the universal ribosomal protein uS2 family. In terms of assembly, component of the small ribosomal subunit. Mature ribosomes consist of a small (40S) and a large (60S) subunit. The 40S subunit contains about 33 different proteins and 1 molecule of RNA (18S). The 60S subunit contains about 49 different proteins and 3 molecules of RNA (25S, 5.8S and 5S). Interacts with RPS21.

It localises to the cytoplasm. Required for the assembly and/or stability of the 40S ribosomal subunit. Required for the processing of the 20S rRNA-precursor to mature 18S rRNA in a late step of the maturation of 40S ribosomal subunits. The chain is Small ribosomal subunit protein uS2A from Vanderwaltozyma polyspora (strain ATCC 22028 / DSM 70294 / BCRC 21397 / CBS 2163 / NBRC 10782 / NRRL Y-8283 / UCD 57-17) (Kluyveromyces polysporus).